The following is a 146-amino-acid chain: ATP synthase epsilon chain (146 aa).

Over residues 92 to 116 the composition is skewed to basic and acidic residues; the sequence is ISVDQARRDRDSLRKKLNEHERSEQ. Residues 92 to 120 form a disordered region; sequence ISVDQARRDRDSLRKKLNEHERSEQDPEV.

It belongs to the ATPase epsilon chain family. In terms of assembly, F-type ATPases have 2 components, CF(1) - the catalytic core - and CF(0) - the membrane proton channel. CF(1) has five subunits: alpha(3), beta(3), gamma(1), delta(1), epsilon(1). CF(0) has three main subunits: a, b and c.

It localises to the cell membrane. Its function is as follows. Produces ATP from ADP in the presence of a proton gradient across the membrane. This is ATP synthase epsilon chain from Cutibacterium acnes (strain DSM 16379 / KPA171202) (Propionibacterium acnes).